The chain runs to 338 residues: Glycerol-3-phosphate dehydrogenase [NAD(P)+] (338 aa).

Positions 13, 14, and 108 each coordinate NADPH. Sn-glycerol 3-phosphate-binding residues include Lys108, Gly139, and Ser141. Ala143 serves as a coordination point for NADPH. Lys194, Asp247, Ser257, Arg258, and Asn259 together coordinate sn-glycerol 3-phosphate. The Proton acceptor role is filled by Lys194. Arg258 lines the NADPH pocket. Val282 and Glu284 together coordinate NADPH.

It belongs to the NAD-dependent glycerol-3-phosphate dehydrogenase family.

It localises to the cytoplasm. It carries out the reaction sn-glycerol 3-phosphate + NAD(+) = dihydroxyacetone phosphate + NADH + H(+). The enzyme catalyses sn-glycerol 3-phosphate + NADP(+) = dihydroxyacetone phosphate + NADPH + H(+). It participates in membrane lipid metabolism; glycerophospholipid metabolism. Its function is as follows. Catalyzes the reduction of the glycolytic intermediate dihydroxyacetone phosphate (DHAP) to sn-glycerol 3-phosphate (G3P), the key precursor for phospholipid synthesis. The polypeptide is Glycerol-3-phosphate dehydrogenase [NAD(P)+] (Streptococcus pneumoniae (strain JJA)).